Reading from the N-terminus, the 650-residue chain is Acetyl-coenzyme A synthetase (650 aa).

Residues 191–194 (RGGR), threonine 311, and asparagine 335 each bind CoA. ATP-binding positions include 387-389 (GEP), 411-416 (DTWWQT), aspartate 500, and arginine 515. Residue serine 523 coordinates CoA. Position 526 (arginine 526) interacts with ATP. 3 residues coordinate Mg(2+): valine 537, histidine 539, and valine 542. Arginine 584 is a binding site for CoA. Lysine 609 carries the N6-acetyllysine modification.

Belongs to the ATP-dependent AMP-binding enzyme family. Requires Mg(2+) as cofactor. Acetylated. Deacetylation by the SIR2-homolog deacetylase activates the enzyme.

It carries out the reaction acetate + ATP + CoA = acetyl-CoA + AMP + diphosphate. In terms of biological role, catalyzes the conversion of acetate into acetyl-CoA (AcCoA), an essential intermediate at the junction of anabolic and catabolic pathways. AcsA undergoes a two-step reaction. In the first half reaction, AcsA combines acetate with ATP to form acetyl-adenylate (AcAMP) intermediate. In the second half reaction, it can then transfer the acetyl group from AcAMP to the sulfhydryl group of CoA, forming the product AcCoA. In Shewanella frigidimarina (strain NCIMB 400), this protein is Acetyl-coenzyme A synthetase.